Reading from the N-terminus, the 156-residue chain is Ribosomal RNA large subunit methyltransferase H (156 aa).

S-adenosyl-L-methionine-binding positions include L73, G104, and 123–128; that span reads LSPLTL.

This sequence belongs to the RNA methyltransferase RlmH family. Homodimer.

The protein resides in the cytoplasm. It catalyses the reaction pseudouridine(1915) in 23S rRNA + S-adenosyl-L-methionine = N(3)-methylpseudouridine(1915) in 23S rRNA + S-adenosyl-L-homocysteine + H(+). Specifically methylates the pseudouridine at position 1915 (m3Psi1915) in 23S rRNA. The polypeptide is Ribosomal RNA large subunit methyltransferase H (Pectobacterium carotovorum subsp. carotovorum (strain PC1)).